Reading from the N-terminus, the 185-residue chain is Ribosome-recycling factor (185 aa).

Belongs to the RRF family.

Its subcellular location is the cytoplasm. Functionally, responsible for the release of ribosomes from messenger RNA at the termination of protein biosynthesis. May increase the efficiency of translation by recycling ribosomes from one round of translation to another. The polypeptide is Ribosome-recycling factor (Citrifermentans bemidjiense (strain ATCC BAA-1014 / DSM 16622 / JCM 12645 / Bem) (Geobacter bemidjiensis)).